A 437-amino-acid chain; its full sequence is GTPase Der (437 aa).

EngA-type G domains follow at residues 2–167 (ATVL…EKKG) and 180–356 (IRVA…NSLF). GTP contacts are provided by residues 8–15 (GKSNVGKS), 55–59 (DTCGI), 118–121 (NKSE), 186–193 (GRPNAGKS), 233–237 (DTAGL), and 299–302 (NKID). One can recognise a KH-like domain in the interval 357–437 (YRVQTSAVNA…PIFLKFKNRH (81 aa)).

The protein belongs to the TRAFAC class TrmE-Era-EngA-EngB-Septin-like GTPase superfamily. EngA (Der) GTPase family. As to quaternary structure, associates with the 50S ribosomal subunit.

GTPase that plays an essential role in the late steps of ribosome biogenesis. In Thermosipho melanesiensis (strain DSM 12029 / CIP 104789 / BI429), this protein is GTPase Der.